A 182-amino-acid polypeptide reads, in one-letter code: U1 small nuclear ribonucleoprotein C (182 aa).

The Matrin-type zinc-finger motif lies at 4–36 (YLCDYCQVWLTHDSQSVRKAHNAGRAHIQNVQD). A disordered region spans residues 129–182 (PQTTASSNTQLTQQQQSLPQTNEHQRARTHSNANNHFTKTHHQGQRSHQRFVRA). Residues 130–150 (QTTASSNTQLTQQQQSLPQTN) show a composition bias toward low complexity. Residues 166 to 182 (TKTHHQGQRSHQRFVRA) show a composition bias toward basic residues.

It belongs to the U1 small nuclear ribonucleoprotein C family. As to quaternary structure, U1 snRNP is composed of the 7 core Sm proteins smb1, smd1, smd2, smd3, sme1, smf1 and smg1 (Sm proteins B, D1, D2, D3, E, F and G, respectively) that assemble in a heptameric protein ring on the Sm site of the small nuclear RNA to form the core snRNP, and at least 9 U1 snRNP-specific proteins usp101/U1-70K, usp102/U1-A, usp103/U1-C, usp106/LUC7, usp105/PRP39, usp104/PRP40, usp107/U1-H, usp108/U1-J and usp109/U1-L. usp103/U1-C interacts with U1 snRNA and the 5' splice-site region of the pre-mRNA.

The protein resides in the nucleus. Functionally, component of the spliceosomal U1 snRNP, which is essential for recognition of the pre-mRNA 5' splice-site and the subsequent assembly of the spliceosome. usp103/U1-C is directly involved in initial 5' splice-site recognition for both constitutive and regulated alternative splicing. The interaction with the 5' splice-site seems to precede base-pairing between the pre-mRNA and the U1 snRNA. Stimulates commitment or early (E) complex formation by stabilizing the base pairing of the 5' end of the U1 snRNA and the 5' splice-site region. The chain is U1 small nuclear ribonucleoprotein C (usp103) from Schizosaccharomyces pombe (strain 972 / ATCC 24843) (Fission yeast).